The chain runs to 728 residues: UvrABC system protein C (728 aa).

Residues 16 to 95 (DSPGVYRFRD…IKEYDPRFNV (80 aa)) enclose the GIY-YIG domain. In terms of domain architecture, UVR spans 208 to 243 (GTYLRRLERQMAEAAEEMEYERAARLRDDIGALKKA). Disordered regions lie at residues 473 to 535 (ADGE…GRPK) and 689 to 728 (VNTA…GQER). The segment covering 487–505 (GDAAPNGDAAPNDGAAPDD) has biased composition (low complexity).

The protein belongs to the UvrC family. Interacts with UvrB in an incision complex.

The protein resides in the cytoplasm. Its function is as follows. The UvrABC repair system catalyzes the recognition and processing of DNA lesions. UvrC both incises the 5' and 3' sides of the lesion. The N-terminal half is responsible for the 3' incision and the C-terminal half is responsible for the 5' incision. This Streptomyces coelicolor (strain ATCC BAA-471 / A3(2) / M145) protein is UvrABC system protein C.